The primary structure comprises 298 residues: MTDAPVISPIDQARILSEALPHMQRYDEETIVIKYGGHAMGAENDAKAFARDIVLLEQTAVNPVVVHGGGPQIATMLKRLGIKSEFAAGLRITDGATIEIVEMVLAGSINKQLVGYINEAGGKAVGLCGKDGNMVTASKATRTMVDPDSRIEEVVDLGFVGEPEKVDLTLLNQLIGHELIPVLAPLATSATGQTFNVNADTFAGAVAGALKAKRLLLLTDVPGVLDKSKQLIPELSIKDARKLIADGTISGGMIPKVETCIYALEQGVEGVVILDGKVPHAVLLELFTNQGTGTLIHK.

Substrate-binding positions include 69-70 (GG), Arg91, and Asn196.

It belongs to the acetylglutamate kinase family. ArgB subfamily.

The protein localises to the cytoplasm. It carries out the reaction N-acetyl-L-glutamate + ATP = N-acetyl-L-glutamyl 5-phosphate + ADP. Its pathway is amino-acid biosynthesis; L-arginine biosynthesis; N(2)-acetyl-L-ornithine from L-glutamate: step 2/4. Functionally, catalyzes the ATP-dependent phosphorylation of N-acetyl-L-glutamate. The sequence is that of Acetylglutamate kinase from Rhodopseudomonas palustris (strain BisB5).